A 430-amino-acid polypeptide reads, in one-letter code: Adenylosuccinate synthetase (430 aa).

GTP-binding positions include 13-19 (GDEGKGK) and 41-43 (GHT). Catalysis depends on Asp14, which acts as the Proton acceptor. Mg(2+) contacts are provided by Asp14 and Gly41. Residues 14-17 (DEGK), 39-42 (NAGH), Thr130, Arg144, Gln225, Thr240, and Arg304 each bind IMP. Residue His42 is the Proton donor of the active site. 300 to 306 (ASTGRPR) serves as a coordination point for substrate. Residues Arg306, 332 to 334 (KLD), and 414 to 416 (STG) each bind GTP.

It belongs to the adenylosuccinate synthetase family. As to quaternary structure, homodimer. Mg(2+) serves as cofactor.

Its subcellular location is the cytoplasm. It carries out the reaction IMP + L-aspartate + GTP = N(6)-(1,2-dicarboxyethyl)-AMP + GDP + phosphate + 2 H(+). The protein operates within purine metabolism; AMP biosynthesis via de novo pathway; AMP from IMP: step 1/2. Its function is as follows. Plays an important role in the de novo pathway of purine nucleotide biosynthesis. Catalyzes the first committed step in the biosynthesis of AMP from IMP. This chain is Adenylosuccinate synthetase, found in Xylella fastidiosa (strain M23).